A 1330-amino-acid polypeptide reads, in one-letter code: ESX-3 secretion system protein EccC3 (1330 aa).

Helical transmembrane passes span 43–63 (LPYLIGILIVGMIVALVATGM) and 65–85 (VISPQTLFFPFVLLLAATALY). 3 FtsK domains span residues 456-662 (GEPL…SVSR), 811-1000 (RDPL…RDSN), and 1090-1280 (LAPV…ADSG). Residues 479-486 (GMTGSGKS), 829-836 (GGPKSGKS), and 1107-1114 (GDARSGKT) contribute to the ATP site.

As to quaternary structure, part of the ESX-3 / type VII secretion system (T7SS), which is composed of cytosolic and membrane components. The ESX-3 membrane complex is composed of EccB3, EccC3, EccD3 and EccE3.

It localises to the cell inner membrane. Functionally, part of the ESX-3 specialized secretion system, which is important for iron and zinc uptake or homeostasis. This is ESX-3 secretion system protein EccC3 from Mycobacterium tuberculosis (strain ATCC 25618 / H37Rv).